The following is a 346-amino-acid chain: 4-hydroxy-2-oxovalerate aldolase (346 aa).

The Pyruvate carboxyltransferase domain maps to 8–260; that stretch reads VTVHDMTLRD…ETGVDVFKIQ (253 aa). 16-17 serves as a coordination point for substrate; the sequence is RD. Aspartate 17 contributes to the Mn(2+) binding site. The Proton acceptor role is filled by histidine 20. Substrate is bound by residues serine 170 and histidine 199. The Mn(2+) site is built by histidine 199 and histidine 201. Tyrosine 290 provides a ligand contact to substrate.

Belongs to the 4-hydroxy-2-oxovalerate aldolase family.

The catalysed reaction is (S)-4-hydroxy-2-oxopentanoate = acetaldehyde + pyruvate. This is 4-hydroxy-2-oxovalerate aldolase from Polaromonas naphthalenivorans (strain CJ2).